The sequence spans 393 residues: Methylthioribose kinase (393 aa).

Residues N38, K53, and 107-109 each bind ATP; that span reads EDL. D225 is a substrate binding site. 242–244 contributes to the ATP binding site; that stretch reads DPE. R332 contributes to the substrate binding site.

The protein belongs to the methylthioribose kinase family. As to quaternary structure, homodimer.

It catalyses the reaction 5-(methylsulfanyl)-D-ribose + ATP = 5-(methylsulfanyl)-alpha-D-ribose 1-phosphate + ADP + H(+). The protein operates within amino-acid biosynthesis; L-methionine biosynthesis via salvage pathway; S-methyl-5-thio-alpha-D-ribose 1-phosphate from S-methyl-5'-thioadenosine (hydrolase route): step 2/2. In terms of biological role, catalyzes the phosphorylation of methylthioribose into methylthioribose-1-phosphate. The polypeptide is Methylthioribose kinase (Bacillus cereus (strain 03BB102)).